The primary structure comprises 613 residues: Laccase 1 (613 aa).

An N-terminal signal peptide occupies residues 1–20; that stretch reads MSRFARLLLIVALFFTNAWA. Plastocyanin-like domains are found at residues 29–142 and 171–359; these read ITWK…IRPK and YLVV…MRIP. An N-linked (GlcNAc...) asparagine glycan is attached at Asn74. Residues His78, His80, His122, and His124 each contribute to the Cu cation site. Residues Asn256, Asn279, Asn444, Asn468, and Asn484 are each glycosylated (N-linked (GlcNAc...) asparagine). The 131-residue stretch at 468-598 folds into the Plastocyanin-like 3 domain; that stretch reads NATRDTENDG…GGMGIAILDG (131 aa). His506, His509, and His511 together coordinate Cu cation. N-linked (GlcNAc...) asparagine glycosylation is present at Asn526. Cu cation is bound by residues His580, Cys581, His582, and His586.

This sequence belongs to the multicopper oxidase family. Cu cation is required as a cofactor.

The protein localises to the cell surface. It functions in the pathway pigment biosynthesis. Laccase; part of the Pks1 gene cluster that mediates the biosynthesis of an anthraquinone derivative pigment that contributes to conidial pigmentation that provides protection from UV radiation, heat and cold stress. The polyketide synthase Pks1 produces 1-acetyl-2,4,6,8-tetrahydroxy-9,10-anthraquinone though condensation of acetyl-CoA with malonyl-CoA. The dehydratase EthD and the laccase Mlac1 further convert the anthraquinone derivative into the final conidial pigment. This chain is Laccase 1, found in Metarhizium robertsii (strain ARSEF 23 / ATCC MYA-3075) (Metarhizium anisopliae (strain ARSEF 23)).